A 957-amino-acid polypeptide reads, in one-letter code: Glycine dehydrogenase (decarboxylating) (957 aa).

Lys-708 is subject to N6-(pyridoxal phosphate)lysine.

Belongs to the GcvP family. In terms of assembly, the glycine cleavage system is composed of four proteins: P, T, L and H. Pyridoxal 5'-phosphate serves as cofactor.

It carries out the reaction N(6)-[(R)-lipoyl]-L-lysyl-[glycine-cleavage complex H protein] + glycine + H(+) = N(6)-[(R)-S(8)-aminomethyldihydrolipoyl]-L-lysyl-[glycine-cleavage complex H protein] + CO2. Its function is as follows. The glycine cleavage system catalyzes the degradation of glycine. The P protein binds the alpha-amino group of glycine through its pyridoxal phosphate cofactor; CO(2) is released and the remaining methylamine moiety is then transferred to the lipoamide cofactor of the H protein. The chain is Glycine dehydrogenase (decarboxylating) from Salmonella agona (strain SL483).